An 81-amino-acid polypeptide reads, in one-letter code: uncharacterized protein (81 aa).

Expressed in fetal brain.

This is an uncharacterized protein from Homo sapiens (Human).